Reading from the N-terminus, the 331-residue chain is tRNA-cytidine(32) 2-sulfurtransferase (331 aa).

The tract at residues 1–33 (MNAPHMNDTAADAATLDDAAAPAGRPALTRREQ) is disordered. Positions 8 to 23 (DTAADAATLDDAAAPA) are enriched in low complexity. The PP-loop motif motif lies at 71–76 (SGGKDS). 3 residues coordinate [4Fe-4S] cluster: Cys146, Cys149, and Cys237.

The protein belongs to the TtcA family. In terms of assembly, homodimer. Mg(2+) is required as a cofactor. The cofactor is [4Fe-4S] cluster.

It is found in the cytoplasm. The enzyme catalyses cytidine(32) in tRNA + S-sulfanyl-L-cysteinyl-[cysteine desulfurase] + AH2 + ATP = 2-thiocytidine(32) in tRNA + L-cysteinyl-[cysteine desulfurase] + A + AMP + diphosphate + H(+). It participates in tRNA modification. Functionally, catalyzes the ATP-dependent 2-thiolation of cytidine in position 32 of tRNA, to form 2-thiocytidine (s(2)C32). The sulfur atoms are provided by the cysteine/cysteine desulfurase (IscS) system. This is tRNA-cytidine(32) 2-sulfurtransferase from Burkholderia orbicola (strain MC0-3).